Consider the following 3391-residue polypeptide: Genome polyprotein (3391 aa).

The interval 1–15 (MNNQRKKTARPSFNM) is interaction with host EXOC1. Residues 1–101 (MNNQRKKTAR…LNIMNRRKRS (101 aa)) lie on the Cytoplasmic side of the membrane. The tract at residues 37 to 72 (LLSGQGPMKLVMAFIAFLRFLAIPPTAGILARWGSF) is hydrophobic; homodimerization of capsid protein C. Positions 101-114 (SVTMLLMLLPTALA) are cleaved as a propeptide — ER anchor for the capsid protein C, removed in mature form by serine protease NS3. A helical membrane pass occupies residues 102–119 (VTMLLMLLPTALAFHLTT). At 120–242 (RGGEPHMIVS…QIQRVETWAL (123 aa)) the chain is on the extracellular side. Residue N183 is glycosylated (N-linked (GlcNAc...) asparagine; by host). Residues 243–260 (RHPGFTVIALFLAHAIGT) form a helical membrane-spanning segment. S261 is a topological domain (cytoplasmic). The chain crosses the membrane as a helical span at residues 262–280 (ITQKGIIFILLMLVTPSMA). Topologically, residues 281–725 (MRCVGIGSRD…HQVFGTAYGV (445 aa)) are extracellular. Intrachain disulfides connect C283/C310, C340/C401, C354/C385, and C372/C396. The N-linked (GlcNAc...) asparagine; by host glycan is linked to N347. Positions 378-391 (DRGWGNGCGLFGKG) are fusion peptide. N433 is a glycosylation site (N-linked (GlcNAc...) asparagine; by host). 2 disulfide bridges follow: C465–C565 and C582–C613. A helical transmembrane segment spans residues 726 to 746 (LFSGVSWTMKIGIGILLTWLG). Topologically, residues 747–752 (LNSRST) are cytoplasmic. The chain crosses the membrane as a helical span at residues 753–773 (SLSMTCIAVGMVTLYLGVMVQ). Residues 774 to 1198 (ADSGCVINWK…NASDRMGMGT (425 aa)) lie on the Extracellular side of the membrane. 6 disulfide bridges follow: C778–C789, C829–C917, C953–C997, C1054–C1103, C1065–C1087, and C1086–C1090. Residues N904 and N981 are each glycosylated (N-linked (GlcNAc...) asparagine; by host). N1189 carries an N-linked (GlcNAc...) asparagine; by host glycan. The chain crosses the membrane as a helical span at residues 1199 to 1219 (TYLALMATFKMRPMFAVGLLF). Topologically, residues 1220–1225 (RRLTSR) are cytoplasmic. Residues 1226 to 1244 (EVLLLTIGLSLVASVELPN) traverse the membrane as a helical segment. The Lumenal portion of the chain corresponds to 1245–1268 (SLEELGDGLAMGIMILKLLTDFQS). The chain crosses the membrane as a helical span at residues 1269–1289 (HQLWATLLSLTFVKTTFSLHY). A1290 is a topological domain (cytoplasmic). Residues 1291-1309 (WKTMAMVLSIVSLFPLCLS) traverse the membrane as a helical segment. The Lumenal portion of the chain corresponds to 1310–1314 (TTSQK). A helical membrane pass occupies residues 1315–1335 (TTWLPVLLGSLGCKPLTMFLI). Topologically, residues 1336–1345 (AENKIWGRKS) are cytoplasmic. A helical transmembrane segment spans residues 1346–1366 (WPLNEGIMAVGIVSILLSSLL). Over 1367–1369 (KND) the chain is Lumenal. Residues 1370 to 1390 (VPLAGPLIAGGMLIACYVISG) traverse the membrane as a helical segment. At 1391–1446 (SSADLSLEKAAEVSWEEEAEHSGASHNILVEVQDDGTMKIKDEERDDTLTILLKAT) the chain is on the cytoplasmic side. An interacts with and activates NS3 protease region spans residues 1397–1436 (LEKAAEVSWEEEAEHSGASHNILVEVQDDGTMKIKDEERD). An intramembrane region (helical) is located at residues 1447 to 1467 (LLAVSGVYPLSIPATLFVWYF). At 1468 to 2147 (WQKKKQRSGV…MEELPDTIET (680 aa)) the chain is on the cytoplasmic side. In terms of domain architecture, Peptidase S7 spans 1475 to 1652 (SGVLWDTPSP…KASQEGPLPE (178 aa)). Catalysis depends on charge relay system; for serine protease NS3 activity residues H1525, D1549, and S1609. Positions 1655–1811 (DEVFRKRNLT…QSNAVIQDEE (157 aa)) constitute a Helicase ATP-binding domain. Positions 1659–1662 (RKRN) are important for RNA-binding. 1668 to 1675 (LHPGSGKT) is a binding site for ATP. A DEAH box motif is present at residues 1759 to 1762 (DEAH). The Helicase C-terminal domain occupies 1821–1988 (SGYEWITDFP…IIPALFEPER (168 aa)). The residue at position 1863 (K1863) is an N6-acetyllysine; by host. Residues 2148–2168 (LMLLALIAVLTGGVTLFFLSG) traverse the membrane as a helical segment. Residues 2169 to 2170 (KG) are Lumenal-facing. Positions 2171-2191 (LGKTSIGLLCVMASSVLLWMA) form an intramembrane region, helical. S2192 is a topological domain (lumenal). The chain crosses the membrane as a helical span at residues 2193–2213 (VEPHWIAASIILEFFLMVLLI). Residues 2214-2228 (PEPDRQRTPQDNQLA) lie on the Cytoplasmic side of the membrane. A helical transmembrane segment spans residues 2229 to 2249 (YVVIGLLFMILTVAANEMGLL). Topologically, residues 2250–2275 (ETTKKDLGIGHVAAENHHHATMLDVD) are lumenal. The segment at residues 2276–2296 (LRPASAWTLYAVATTVITPMM) is an intramembrane region (helical). Residues 2297-2348 (RHTIENTTANISLTAIANQAAILMGLDKGWPISKMDIGVPLLALGCYSQVNP) are Lumenal-facing. N-linked (GlcNAc...) asparagine; by host glycans are attached at residues N2302 and N2306. Residues 2349–2369 (LTLTAAVLMLVAHYAIIGPGL) form a helical membrane-spanning segment. Topologically, residues 2370–2414 (QAKATREAQKRTAAGIMKNPTVDGIVAIDLDPVVYDAKFEKQLGQ) are cytoplasmic. Residues 2415–2435 (IMLLILCTSQILLMRTTWALC) form a helical membrane-spanning segment. Residues 2436–2460 (ESITLATGPLTTLWEGSPGKFWNTT) lie on the Lumenal side of the membrane. N-linked (GlcNAc...) asparagine; by host glycosylation occurs at N2458. The helical transmembrane segment at 2461-2481 (IAVSMANIFRGSYLAGAGLAF) threads the bilayer. At 2482–3391 (SLMKSLGGGR…NESDPEGALW (910 aa)) the chain is on the cytoplasmic side. An mRNA cap 0-1 NS5-type MT domain is found at 2494-2755 (TGAKGKHWER…DVDLGAGTRH (262 aa)). Position 2548 (S2548) interacts with S-adenosyl-L-methionine. S2548 carries the phosphoserine modification. Residue K2553 is the For 2'-O-MTase activity of the active site. An SUMO-interacting motif motif is present at residues 2569-2572 (VIDL). Residues G2578, W2579, T2596, K2597, D2623, and V2624 each contribute to the S-adenosyl-L-methionine site. D2638 acts as the For 2'-O-MTase activity in catalysis. I2639 contributes to the S-adenosyl-L-methionine binding site. Catalysis depends on for 2'-O-MTase activity residues K2672 and E2708. Residue Y2710 coordinates S-adenosyl-L-methionine. Zn(2+) is bound by residues E2929, H2933, C2938, and C2941. Positions 3019 to 3168 (GNMYADDTAG…KPIDDRFATA (150 aa)) constitute a RdRp catalytic domain. The Zn(2+) site is built by H3203, C3219, and C3338.

This sequence in the N-terminal section; belongs to the class I-like SAM-binding methyltransferase superfamily. mRNA cap 0-1 NS5-type methyltransferase family. As to quaternary structure, homodimer. Interacts (via N-terminus) with host EXOC1 (via C-terminus); this interaction results in EXOC1 degradation through the proteasome degradation pathway. In terms of assembly, forms heterodimers with envelope protein E in the endoplasmic reticulum and Golgi. Homodimer; in the endoplasmic reticulum and Golgi. Interacts with protein prM. Interacts with non-structural protein 1. As to quaternary structure, homodimer; Homohexamer when secreted. Interacts with envelope protein E. In terms of assembly, interacts (via N-terminus) with serine protease NS3. Forms a heterodimer with serine protease NS3. May form homooligomers. As to quaternary structure, forms a heterodimer with NS2B. Interacts with NS4B. Interacts with unphosphorylated RNA-directed RNA polymerase NS5; this interaction stimulates RNA-directed RNA polymerase NS5 guanylyltransferase activity. Interacts with host SHFL. In terms of assembly, interacts with host MAVS; this interaction inhibits the synthesis of IFN-beta. Interacts with host SHFL. Interacts with host AUP1; the interaction occurs in the presence of Dengue virus NS4B and induces lipophagy which facilitates production of virus progeny particles. Interacts with serine protease NS3. As to quaternary structure, homodimer. Interacts with host STAT2; this interaction inhibits the phosphorylation of the latter, and, when all viral proteins are present (polyprotein), targets STAT2 for degradation. Interacts with serine protease NS3. In terms of processing, specific enzymatic cleavages in vivo yield mature proteins. Cleavages in the lumen of endoplasmic reticulum are performed by host signal peptidase, whereas cleavages in the cytoplasmic side are performed by serine protease NS3. Signal cleavage at the 2K-4B site requires a prior NS3 protease-mediated cleavage at the 4A-2K site. Cleaved in post-Golgi vesicles by a host furin, releasing the mature small envelope protein M, and peptide pr. This cleavage is incomplete as up to 30% of viral particles still carry uncleaved prM. Post-translationally, N-glycosylated. In terms of processing, N-glycosylated. The excreted form is glycosylated and this is required for efficient secretion of the protein from infected cells. Acetylated by host KAT5. Acetylation modulates NS3 RNA-binding and unwinding activities and plays an important positive role for viral replication. Post-translationally, sumoylation of RNA-directed RNA polymerase NS5 increases NS5 protein stability allowing proper viral RNA replication. In terms of processing, phosphorylated on serines residues. This phosphorylation may trigger NS5 nuclear localization.

The protein resides in the virion. The protein localises to the host nucleus. It localises to the host cytoplasm. It is found in the host perinuclear region. Its subcellular location is the secreted. The protein resides in the virion membrane. The protein localises to the host endoplasmic reticulum membrane. It localises to the host mitochondrion. The enzyme catalyses Selective hydrolysis of -Xaa-Xaa-|-Yaa- bonds in which each of the Xaa can be either Arg or Lys and Yaa can be either Ser or Ala.. The catalysed reaction is RNA(n) + a ribonucleoside 5'-triphosphate = RNA(n+1) + diphosphate. It catalyses the reaction a ribonucleoside 5'-triphosphate + H2O = a ribonucleoside 5'-diphosphate + phosphate + H(+). It carries out the reaction ATP + H2O = ADP + phosphate + H(+). The enzyme catalyses a 5'-end (5'-triphosphoguanosine)-ribonucleoside in mRNA + S-adenosyl-L-methionine = a 5'-end (N(7)-methyl 5'-triphosphoguanosine)-ribonucleoside in mRNA + S-adenosyl-L-homocysteine. The catalysed reaction is a 5'-end (N(7)-methyl 5'-triphosphoguanosine)-ribonucleoside in mRNA + S-adenosyl-L-methionine = a 5'-end (N(7)-methyl 5'-triphosphoguanosine)-(2'-O-methyl-ribonucleoside) in mRNA + S-adenosyl-L-homocysteine + H(+). In terms of biological role, plays a role in virus budding by binding to the cell membrane and gathering the viral RNA into a nucleocapsid that forms the core of a mature virus particle. During virus entry, may induce genome penetration into the host cytoplasm after hemifusion induced by the surface proteins. Can migrate to the cell nucleus where it modulates host functions. Overcomes the anti-viral effects of host EXOC1 by sequestering and degrading the latter through the proteasome degradation pathway. Functionally, inhibits RNA silencing by interfering with host Dicer. Its function is as follows. Prevents premature fusion activity of envelope proteins in trans-Golgi by binding to envelope protein E at pH6.0. After virion release in extracellular space, gets dissociated from E dimers. Acts as a chaperone for envelope protein E during intracellular virion assembly by masking and inactivating envelope protein E fusion peptide. prM is the only viral peptide matured by host furin in the trans-Golgi network probably to avoid catastrophic activation of the viral fusion activity in acidic Golgi compartment prior to virion release. prM-E cleavage is inefficient, and many virions are only partially matured. These uncleaved prM would play a role in immune evasion. In terms of biological role, may play a role in virus budding. Exerts cytotoxic effects by activating a mitochondrial apoptotic pathway through M ectodomain. May display a viroporin activity. Functionally, binds to host cell surface receptor and mediates fusion between viral and cellular membranes. Envelope protein is synthesized in the endoplasmic reticulum in the form of heterodimer with protein prM. They play a role in virion budding in the ER, and the newly formed immature particle is covered with 60 spikes composed of heterodimer between precursor prM and envelope protein E. The virion is transported to the Golgi apparatus where the low pH causes dissociation of PrM-E heterodimers and formation of E homodimers. prM-E cleavage is inefficient, and many virions are only partially matured. These uncleaved prM would play a role in immune evasion. Its function is as follows. Involved in immune evasion, pathogenesis and viral replication. Once cleaved off the polyprotein, is targeted to three destinations: the viral replication cycle, the plasma membrane and the extracellular compartment. Essential for viral replication. Required for formation of the replication complex and recruitment of other non-structural proteins to the ER-derived membrane structures. Excreted as a hexameric lipoparticle that plays a role against host immune response. Antagonizing the complement function. Binds to the host macrophages and dendritic cells. Inhibits signal transduction originating from Toll-like receptor 3 (TLR3). Disrupts the host endothelial glycocalyx layer of host pulmonary microvascular endothelial cells, inducing degradation of sialic acid and shedding of heparan sulfate proteoglycans. NS1 induces expression of sialidases, heparanase, and activates cathepsin L, which activates heparanase via enzymatic cleavage. These effects are probably linked to the endothelial hyperpermeability observed in severe dengue disease. In terms of biological role, component of the viral RNA replication complex that functions in virion assembly and antagonizes the host immune response. Functionally, required cofactor for the serine protease function of NS3. May have membrane-destabilizing activity and form viroporins. Its function is as follows. Displays three enzymatic activities: serine protease, NTPase and RNA c. NS3 serine protease, in association with NS2B, performs its autocleavage and cleaves the polyprotein at dibasic sites in the cytoplasm: C-prM, NS2A-NS2B, NS2B-NS3, NS3-NS4A, NS4A-2K and NS4B-NS5. NS3 RNA helicase binds RNA and unwinds dsRNA in the 3' to 5' direction. Regulates the ATPase activity of the NS3 helicase activity. NS4A allows NS3 helicase to conserve energy during unwinding. Plays a role in the inhibition of the host innate immune response. Interacts with host MAVS and thereby prevents the interaction between RIGI and MAVS. In turn, IFN-beta production is impaired. Interacts with host AUP1 which mediates induction of lipophagy in host cells and facilitates production of virus progeny particles. In terms of biological role, functions as a signal peptide for NS4B and is required for the interferon antagonism activity of the latter. Functionally, induces the formation of ER-derived membrane vesicles where the viral replication takes place. Inhibits interferon (IFN)-induced host STAT1 phosphorylation and nuclear translocation, thereby preventing the establishment of cellular antiviral state by blocking the IFN-alpha/beta pathway. Its function is as follows. Replicates the viral (+) and (-) RNA genome, and performs the capping of genomes in the cytoplasm. NS5 methylates viral RNA cap at guanine N-7 and ribose 2'-O positions. Besides its role in RNA genome replication, also prevents the establishment of cellular antiviral state by blocking the interferon-alpha/beta (IFN-alpha/beta) signaling pathway. Inhibits host TYK2 and STAT2 phosphorylation, thereby preventing activation of JAK-STAT signaling pathway. The chain is Genome polyprotein from Aedes aegypti (Yellowfever mosquito).